We begin with the raw amino-acid sequence, 298 residues long: 4-hydroxy-tetrahydrodipicolinate synthase (298 aa).

T51 lines the pyruvate pocket. Y140 (proton donor/acceptor) is an active-site residue. K168 (schiff-base intermediate with substrate) is an active-site residue. Position 210 (I210) interacts with pyruvate.

This sequence belongs to the DapA family. In terms of assembly, homotetramer; dimer of dimers.

The protein resides in the cytoplasm. The catalysed reaction is L-aspartate 4-semialdehyde + pyruvate = (2S,4S)-4-hydroxy-2,3,4,5-tetrahydrodipicolinate + H2O + H(+). The protein operates within amino-acid biosynthesis; L-lysine biosynthesis via DAP pathway; (S)-tetrahydrodipicolinate from L-aspartate: step 3/4. Its function is as follows. Catalyzes the condensation of (S)-aspartate-beta-semialdehyde [(S)-ASA] and pyruvate to 4-hydroxy-tetrahydrodipicolinate (HTPA). The polypeptide is 4-hydroxy-tetrahydrodipicolinate synthase (Acidovorax sp. (strain JS42)).